The sequence spans 610 residues: Glutamine--fructose-6-phosphate aminotransferase [isomerizing] (610 aa).

Cys2 acts as the Nucleophile; for GATase activity in catalysis. The Glutamine amidotransferase type-2 domain maps to 2 to 221 (CGIVGAVAQR…DGDVVDLQLA (220 aa)). 2 consecutive SIS domains span residues 286 to 426 (AYKV…TRGR) and 459 to 600 (WADR…VDKP). The active-site For Fru-6P isomerization activity is Lys605.

In terms of assembly, homodimer.

Its subcellular location is the cytoplasm. The enzyme catalyses D-fructose 6-phosphate + L-glutamine = D-glucosamine 6-phosphate + L-glutamate. Catalyzes the first step in hexosamine metabolism, converting fructose-6P into glucosamine-6P using glutamine as a nitrogen source. This is Glutamine--fructose-6-phosphate aminotransferase [isomerizing] from Bordetella bronchiseptica (strain ATCC BAA-588 / NCTC 13252 / RB50) (Alcaligenes bronchisepticus).